A 44-amino-acid chain; its full sequence is Protein PsbN (44 aa).

Residues 6–26 form a helical membrane-spanning segment; sequence FFFTLFLWFFLLSITIYSIYI.

The protein belongs to the PsbN family.

Its subcellular location is the plastid. The protein localises to the chloroplast thylakoid membrane. Functionally, may play a role in photosystem I and II biogenesis. In Oedogonium cardiacum (Filamentous green alga), this protein is Protein PsbN.